We begin with the raw amino-acid sequence, 337 residues long: Phosphate acyltransferase (337 aa).

It belongs to the PlsX family. As to quaternary structure, homodimer. Probably interacts with PlsY.

It localises to the cytoplasm. The catalysed reaction is a fatty acyl-[ACP] + phosphate = an acyl phosphate + holo-[ACP]. It functions in the pathway lipid metabolism; phospholipid metabolism. In terms of biological role, catalyzes the reversible formation of acyl-phosphate (acyl-PO(4)) from acyl-[acyl-carrier-protein] (acyl-ACP). This enzyme utilizes acyl-ACP as fatty acyl donor, but not acyl-CoA. This chain is Phosphate acyltransferase, found in Ehrlichia canis (strain Jake).